The sequence spans 231 residues: Adenosylcobinamide-GDP ribazoletransferase (231 aa).

5 helical membrane passes run 28 to 48 (LWLF…PHFI), 97 to 117 (TGAG…TLLY), 121 to 141 (FWEI…LMLL), 162 to 182 (VFIG…ESLA), and 209 to 229 (VIGS…TIAG).

This sequence belongs to the CobS family. Mg(2+) serves as cofactor.

Its subcellular location is the cell membrane. It carries out the reaction alpha-ribazole + adenosylcob(III)inamide-GDP = adenosylcob(III)alamin + GMP + H(+). It catalyses the reaction alpha-ribazole 5'-phosphate + adenosylcob(III)inamide-GDP = adenosylcob(III)alamin 5'-phosphate + GMP + H(+). Its pathway is cofactor biosynthesis; adenosylcobalamin biosynthesis; adenosylcobalamin from cob(II)yrinate a,c-diamide: step 7/7. Functionally, joins adenosylcobinamide-GDP and alpha-ribazole to generate adenosylcobalamin (Ado-cobalamin). Also synthesizes adenosylcobalamin 5'-phosphate from adenosylcobinamide-GDP and alpha-ribazole 5'-phosphate. This Archaeoglobus fulgidus (strain ATCC 49558 / DSM 4304 / JCM 9628 / NBRC 100126 / VC-16) protein is Adenosylcobinamide-GDP ribazoletransferase (cobS2).